The primary structure comprises 145 residues: Halilectin 3, alpha chain (145 aa).

A glycan (N-linked (GlcNAc...) asparagine) is linked at asparagine 73.

As to quaternary structure, probable heterotrimer consisting of an alpha chain and two beta chains. The alpha chain can probably have different glycosylation states. Glycosylated.

Lectin with affinity for N-acetyl-galactosamine, carragenan and glycoprotein porcine stomach mucin (PSM). Has metal-independent hemagglutinating activity towards erythrocytes from rabbit and human. Hemagglutinating activity is not inhibited by D-galactose, D-glucose, D-mannose, D-fucose, methyl-alpha-D-galactopyranoside, methyl-alpha-D-glucopyranoside, N-acetyl-glucosamine, N-acetyl-mannosamine, D-fructose, alpha-D-lactose, beta-D-lactose, D-lactulose, D-sucrose, fucoidan or glycoproteins thyroglobulin and ovalmucoid. The polypeptide is Halilectin 3, alpha chain (Haliclona caerulea (Blue Caribbean sponge)).